The sequence spans 212 residues: tRNA (guanine-N(7)-)-methyltransferase (212 aa).

S-adenosyl-L-methionine-binding residues include glutamate 44, aspartate 69, aspartate 96, and aspartate 118. Aspartate 118 is a catalytic residue. Substrate is bound at residue lysine 122. The segment at 124-129 (RHEKRR) is interaction with RNA. Substrate is bound by residues aspartate 154 and 191–194 (TEYE).

The protein belongs to the class I-like SAM-binding methyltransferase superfamily. TrmB family.

It catalyses the reaction guanosine(46) in tRNA + S-adenosyl-L-methionine = N(7)-methylguanosine(46) in tRNA + S-adenosyl-L-homocysteine. It functions in the pathway tRNA modification; N(7)-methylguanine-tRNA biosynthesis. Its function is as follows. Catalyzes the formation of N(7)-methylguanine at position 46 (m7G46) in tRNA. The protein is tRNA (guanine-N(7)-)-methyltransferase of Streptococcus suis (strain 05ZYH33).